A 578-amino-acid polypeptide reads, in one-letter code: Proline--tRNA ligase (578 aa).

The protein belongs to the class-II aminoacyl-tRNA synthetase family. ProS type 1 subfamily. Homodimer.

It localises to the cytoplasm. The enzyme catalyses tRNA(Pro) + L-proline + ATP = L-prolyl-tRNA(Pro) + AMP + diphosphate. Functionally, catalyzes the attachment of proline to tRNA(Pro) in a two-step reaction: proline is first activated by ATP to form Pro-AMP and then transferred to the acceptor end of tRNA(Pro). As ProRS can inadvertently accommodate and process non-cognate amino acids such as alanine and cysteine, to avoid such errors it has two additional distinct editing activities against alanine. One activity is designated as 'pretransfer' editing and involves the tRNA(Pro)-independent hydrolysis of activated Ala-AMP. The other activity is designated 'posttransfer' editing and involves deacylation of mischarged Ala-tRNA(Pro). The misacylated Cys-tRNA(Pro) is not edited by ProRS. The polypeptide is Proline--tRNA ligase (Paraburkholderia phymatum (strain DSM 17167 / CIP 108236 / LMG 21445 / STM815) (Burkholderia phymatum)).